A 1653-amino-acid chain; its full sequence is Alpha-2-macroglobulin (1653 aa).

A signal peptide spans Met-1 to Gly-17. Cys-18 carries N-palmitoyl cysteine lipidation. Cys-18 carries the S-diacylglycerol cysteine lipid modification. The segment at residues Cys-1187–Gln-1190 is a cross-link (isoglutamyl cysteine thioester (Cys-Gln)). The stretch at Asn-1559–Lys-1589 forms a coiled coil.

The protein belongs to the protease inhibitor I39 (alpha-2-macroglobulin) family. Bacterial alpha-2-macroglobulin subfamily. In terms of assembly, may form homooligomers.

It is found in the cell inner membrane. Functionally, protects the bacterial cell from host peptidases. Acts by a 'trapping' mechanism. Cleavage of the bait-region domain by host peptidases leads to a global conformational change, which results in entrapment of the host peptidase and activation of the thioester bond that covalently binds the attacking host peptidase. Trapped peptidases are still active except against very large substrates. May protect the entire periplam, including the lipoproteins anchored to the periplasmic side of the outer membrane, against intruding endopeptidases. This chain is Alpha-2-macroglobulin (yfhM), found in Escherichia coli (strain K12).